Reading from the N-terminus, the 589-residue chain is MTSRDLGSHDNLSPPFANSRIQSKTERGSYSSYGRENVQGCHQSLLGGDMDMGNPGTLSPTKPGSQYYPYSSNNARRRPLHSSTMEVQTKKVRKVPPGLPSSVYAPSASTADYNRDSPGYSSSKPAASTFSSSFFMQDGHHSSDPWSSSSGMNQPGYGGMLGNSHIPQSSSYCSLHPHERLSYPSHSSADINSSLPPMSTFHRSGTNHYSTSSCTPPANGTDSIMANRGTGAAGSSQTGDALGKALASIYSPDHTNNSFSSNPSTPVGSPPSLSAGTAVWSRNGGQASSSPNYEGPLHSLQSRIEDRLERLDDAIHVLRNHAVGPSTAVPGGHGDMHGIIGPSHNGAMGSLGSGYGTGLLSANRHSLMVGAHREDGVALRGSHSLLPNQVPVPQLPVQSATSPDLNPPQDPYRGMPPGLQGQSVSSGSSEIKSDDEGDENLQDTKSSEDKKLDDDKKDIKSITRSRSSNNDDEDLTPEQKAEREKERRMANNARERLRVRDINEAFKELGRMVQLHLKSDKPQTKLLILHQAVAVILSLEQQVRERNLNPKAACLKRREEEKVSSEPPPLSLAGPHPGMGDTANHMGQM.

6 disordered regions span residues 1–124 (MTSR…SSSK), 138–163 (DGHH…MLGN), 184–239 (PSHS…SQTG), 254–297 (HTNN…EGPL), 384–492 (SLLP…MANN), and 556–589 (KRRE…MGQM). Residues serine 8 and serine 13 each carry the phosphoserine modification. The segment covering 56–74 (GTLSPTKPGSQYYPYSSNN) has biased composition (polar residues). The interval 136–157 (MQDGHHSSDPWSSSSGMNQPGY) is leucine-zipper. Polar residues predominate over residues 184 to 224 (PSHSSADINSSLPPMSTFHRSGTNHYSTSSCTPPANGTDSI). A compositionally biased stretch (low complexity) spans 255 to 266 (TNNSFSSNPSTP). Residues 283 to 292 (NGGQASSSPN) show a composition bias toward polar residues. Residue serine 290 is modified to Phosphoserine. The segment at 380–403 (RGSHSLLPNQVPVPQLPVQSATSP) is class A specific domain. 2 stretches are compositionally biased toward low complexity: residues 385–398 (LLPN…LPVQ) and 421–430 (GQSVSSGSSE). Serine 433 is modified (phosphoserine). Composition is skewed to basic and acidic residues over residues 445 to 461 (KSSE…DIKS) and 477 to 492 (PEQK…MANN). One can recognise a bHLH domain in the interval 486–539 (ERRMANNARERLRVRDINEAFKELGRMVQLHLKSDKPQTKLLILHQAVAVILSL).

In terms of assembly, efficient DNA binding requires dimerization with another bHLH protein. Forms homo- or heterooligomers with myogenin. Interacts with HIVEP2. Interacts with NEUROD2. Interacts with AGBL1.

The protein resides in the nucleus. Functionally, transcription factor that binds to the immunoglobulin enhancer Mu-E5/KE5-motif. Involved in the initiation of neuronal differentiation. Activates transcription by binding to the E box (5'-CANNTG-3'). Binds to the E-box present in the somatostatin receptor 2 initiator element (SSTR2-INR) to activate transcription. Interacts with the CCAAT displacement protein (CDP2) to bind the tyrosine hydroxylase enhancer. The sequence is that of Transcription factor 4 (Tcf4) from Rattus norvegicus (Rat).